Consider the following 420-residue polypeptide: Probable acetate kinase (420 aa).

N10 lines the Mg(2+) pocket. K17 serves as a coordination point for ATP. R97 provides a ligand contact to substrate. D153 acts as the Proton donor/acceptor in catalysis. Residue 213-217 (HIGSG) participates in ATP binding. E403 contributes to the Mg(2+) binding site.

It belongs to the acetokinase family. The cofactor is Mg(2+).

It catalyses the reaction acetate + ATP = acetyl phosphate + ADP. The protein operates within metabolic intermediate biosynthesis; acetyl-CoA biosynthesis; acetyl-CoA from acetate: step 1/2. The chain is Probable acetate kinase from Emericella nidulans (strain FGSC A4 / ATCC 38163 / CBS 112.46 / NRRL 194 / M139) (Aspergillus nidulans).